The sequence spans 468 residues: UDP-N-acetylmuramate--L-alanine ligase (468 aa).

112 to 118 (GTHGKTT) contacts ATP.

It belongs to the MurCDEF family.

It localises to the cytoplasm. The catalysed reaction is UDP-N-acetyl-alpha-D-muramate + L-alanine + ATP = UDP-N-acetyl-alpha-D-muramoyl-L-alanine + ADP + phosphate + H(+). Its pathway is cell wall biogenesis; peptidoglycan biosynthesis. Its function is as follows. Cell wall formation. This chain is UDP-N-acetylmuramate--L-alanine ligase, found in Bordetella bronchiseptica (strain ATCC BAA-588 / NCTC 13252 / RB50) (Alcaligenes bronchisepticus).